Reading from the N-terminus, the 161-residue chain is Nucleotide-binding protein Gura_0717 (161 aa).

The protein belongs to the YajQ family.

Functionally, nucleotide-binding protein. This Geotalea uraniireducens (strain Rf4) (Geobacter uraniireducens) protein is Nucleotide-binding protein Gura_0717.